Here is a 390-residue protein sequence, read N- to C-terminus: Tryptophan synthase beta chain (390 aa).

At Lys-90 the chain carries N6-(pyridoxal phosphate)lysine.

This sequence belongs to the TrpB family. As to quaternary structure, tetramer of two alpha and two beta chains. Requires pyridoxal 5'-phosphate as cofactor.

It carries out the reaction (1S,2R)-1-C-(indol-3-yl)glycerol 3-phosphate + L-serine = D-glyceraldehyde 3-phosphate + L-tryptophan + H2O. The protein operates within amino-acid biosynthesis; L-tryptophan biosynthesis; L-tryptophan from chorismate: step 5/5. In terms of biological role, the beta subunit is responsible for the synthesis of L-tryptophan from indole and L-serine. The polypeptide is Tryptophan synthase beta chain (Bacteroides fragilis (strain ATCC 25285 / DSM 2151 / CCUG 4856 / JCM 11019 / LMG 10263 / NCTC 9343 / Onslow / VPI 2553 / EN-2)).